We begin with the raw amino-acid sequence, 174 residues long: Cytochrome c-type biogenesis protein CcmE (174 aa).

The Cytoplasmic portion of the chain corresponds to 1–8 (MNPRRKSR). The chain crosses the membrane as a helical; Signal-anchor for type II membrane protein span at residues 9-29 (LSVVLFILLGISVASALVLYA). The Periplasmic portion of the chain corresponds to 30 to 174 (LRQNIDLFYT…QEKQFKEGNQ (145 aa)). Heme-binding residues include His-131 and Tyr-135. A disordered region spans residues 149 to 174 (KPMGISDLKNESDRDRQEKQFKEGNQ). Over residues 156-174 (LKNESDRDRQEKQFKEGNQ) the composition is skewed to basic and acidic residues.

The protein belongs to the CcmE/CycJ family.

The protein localises to the cell inner membrane. Functionally, heme chaperone required for the biogenesis of c-type cytochromes. Transiently binds heme delivered by CcmC and transfers the heme to apo-cytochromes in a process facilitated by CcmF and CcmH. This Histophilus somni (strain 2336) (Haemophilus somnus) protein is Cytochrome c-type biogenesis protein CcmE.